Consider the following 340-residue polypeptide: Replication factor C subunit 2 (340 aa).

59–66 (GSPGTGKT) provides a ligand contact to ATP.

Belongs to the activator 1 small subunits family. As to quaternary structure, heteropentamer of subunits rfc1, rfc2, rfc3, rfc4 and rfc5 that forms a complex (RFC) with PCNA in the presence of ATP. Two other complexes exist where rfc1 can be replaced by either ctf18 or elg1 to form the ctf18-RFC or the elg1-RFC complexes respectively.

The protein localises to the nucleus. Its function is as follows. The elongation of primed DNA templates by DNA polymerase delta and epsilon requires the action of the accessory proteins PCNA and activator 1. Subunit 2 binds ATP and single-stranded DNA. The polypeptide is Replication factor C subunit 2 (rfc2) (Schizosaccharomyces pombe (strain 972 / ATCC 24843) (Fission yeast)).